We begin with the raw amino-acid sequence, 264 residues long: MKIEAVIFDWAGTTVDYGCFAPLEVFMEIFKNRGVMITAEEARRPMGLLKIDHVRALTEMPRIRGEWERVFGQLPTEADVQEMYEEFEEILFSILPRYATPISGVKEVVTYLRSQGIKIGSTTGYTREMMDIVAREAKAQGYEPDYLVTPDDVPAGRPYPWMCYQNAMQLNVYPMKHMVKVGDTISDMKEGRNAGMWTVGVILGSSELGLTEKEVESMDLVALQERMEVVRKRFIESGAHYVIETMKELPQVIEYIEKQEFIIS.

Catalysis depends on Asp9, which acts as the Nucleophile. Mg(2+) is bound by residues Asp9 and Ala11. Lys50 (schiff-base intermediate with substrate) is an active-site residue. Residue Asp183 participates in Mg(2+) binding.

The protein belongs to the HAD-like hydrolase superfamily. PhnX family. Homodimer. It depends on Mg(2+) as a cofactor.

The enzyme catalyses phosphonoacetaldehyde + H2O = acetaldehyde + phosphate + H(+). Involved in phosphonate degradation. This is Phosphonoacetaldehyde hydrolase from Bacillus cytotoxicus (strain DSM 22905 / CIP 110041 / 391-98 / NVH 391-98).